A 291-amino-acid chain; its full sequence is Tyrosine recombinase XerD (291 aa).

The region spanning 1–82 (MEEGLIDRLL…ACKRLYIWME (82 aa)) is the Core-binding (CB) domain. The 183-residue stretch at 103–285 (NIPTLITEQQ…ANVWLQGVVK (183 aa)) folds into the Tyr recombinase domain. Active-site residues include Arg143, Lys167, His237, Arg240, and His263. Tyr272 (O-(3'-phospho-DNA)-tyrosine intermediate) is an active-site residue.

The protein belongs to the 'phage' integrase family. XerD subfamily. In terms of assembly, forms a cyclic heterotetrameric complex composed of two molecules of XerC and two molecules of XerD.

The protein resides in the cytoplasm. In terms of biological role, site-specific tyrosine recombinase, which acts by catalyzing the cutting and rejoining of the recombining DNA molecules. The XerC-XerD complex is essential to convert dimers of the bacterial chromosome into monomers to permit their segregation at cell division. It also contributes to the segregational stability of plasmids. The sequence is that of Tyrosine recombinase XerD from Neisseria meningitidis serogroup A / serotype 4A (strain DSM 15465 / Z2491).